Consider the following 355-residue polypeptide: Serum paraoxonase/arylesterase 1 (355 aa).

C42 and C353 are oxidised to a cystine. Ca(2+)-binding residues include E53 and D54. Residue H115 is the Proton acceptor of the active site. Ca(2+)-binding residues include I117, N168, D169, and N224. An N-linked (GlcNAc...) asparagine glycan is attached at N253. Residues D269 and N270 each coordinate Ca(2+). N-linked (GlcNAc...) asparagine glycans are attached at residues N270 and N324.

This sequence belongs to the paraoxonase family. As to quaternary structure, homodimer. Interacts with CLU. Ca(2+) is required as a cofactor. Glycosylated. Post-translationally, the signal sequence is not cleaved. In terms of tissue distribution, plasma. Associated with HDL.

It is found in the secreted. The protein resides in the extracellular space. The enzyme catalyses a phenyl acetate + H2O = a phenol + acetate + H(+). The catalysed reaction is An aryl dialkyl phosphate + H2O = dialkyl phosphate + an aryl alcohol.. It catalyses the reaction an N-acyl-L-homoserine lactone + H2O = an N-acyl-L-homoserine + H(+). In terms of biological role, hydrolyzes the toxic metabolites of a variety of organophosphorus insecticides. Capable of hydrolyzing a broad spectrum of organophosphate substrates and lactones, and a number of aromatic carboxylic acid esters. Mediates an enzymatic protection of low density lipoproteins against oxidative modification. The polypeptide is Serum paraoxonase/arylesterase 1 (Pon1) (Rattus norvegicus (Rat)).